Here is a 210-residue protein sequence, read N- to C-terminus: MAKTYDYLFKLLLIGDSGVGKTCLLFRFSEDAFNTTFISTIGIDFKIRTVELDGKKIKLQIWDTAGQERFRTITTAYYRGAMGIMKVYDITNEKSFDNIKNWIRNIEEHASSDVERMILGNKCDMNEKRQVSKERGEKLAIDYGIKFLETSAKSSINVEEAFITLARDIMTKLNKKMNENSLQEAVDKLKSPPKKPSQKKKQLSFRCSLL.

15–22 lines the GTP pocket; it reads GDSGVGKT. The Effector region motif lies at 37–45; sequence FISTIGIDF. GTP contacts are provided by residues 63–67 and 121–124; these read DTAGQ and NKCD. Position 207 is a cysteine methyl ester (C207). Residue C207 is the site of S-geranylgeranyl cysteine attachment. Residues 208–210 constitute a propeptide, removed in mature form; it reads SLL.

Belongs to the small GTPase superfamily. Rab family.

It is found in the cell membrane. The sequence is that of Ras-related protein Rab-8 from Diplobatis ommata (Ocellated electric ray).